A 116-amino-acid chain; its full sequence is Transmembrane protein 213 (116 aa).

The N-terminal stretch at 1 to 35 (MAQSGVFLRNPGHLTSAPQAALLFSLVLTSFHLSC) is a signal peptide. Residues 36-79 (GTETSSSNSTLSAHHPDPGTLEQCANVDFCPLASLCCRASVDEY) lie on the Extracellular side of the membrane. Residues 80 to 100 (GWIAAAVGWSFWFLTLILLCV) traverse the membrane as a helical segment. Residues 101–116 (DKLMKLTPEEPKDLAA) lie on the Cytoplasmic side of the membrane.

It is found in the membrane. This chain is Transmembrane protein 213 (Tmem213), found in Mus musculus (Mouse).